A 310-amino-acid chain; its full sequence is HPr kinase/phosphorylase (310 aa).

Active-site residues include H138 and K159. 153–160 is a binding site for ATP; sequence GDSGIGKS. S160 serves as a coordination point for Mg(2+). The active-site Proton acceptor; for phosphorylation activity. Proton donor; for dephosphorylation activity is the D177. An important for the catalytic mechanism of both phosphorylation and dephosphorylation region spans residues 201–210; sequence LEIRGVGIID. Position 202 (E202) interacts with Mg(2+). The active site involves R243. The tract at residues 264-269 is important for the catalytic mechanism of dephosphorylation; it reads PVKTGR.

The protein belongs to the HPrK/P family. In terms of assembly, homohexamer. Mg(2+) is required as a cofactor.

The catalysed reaction is [HPr protein]-L-serine + ATP = [HPr protein]-O-phospho-L-serine + ADP + H(+). It carries out the reaction [HPr protein]-O-phospho-L-serine + phosphate + H(+) = [HPr protein]-L-serine + diphosphate. Its function is as follows. Catalyzes the ATP- as well as the pyrophosphate-dependent phosphorylation of a specific serine residue in HPr, a phosphocarrier protein of the phosphoenolpyruvate-dependent sugar phosphotransferase system (PTS). HprK/P also catalyzes the pyrophosphate-producing, inorganic phosphate-dependent dephosphorylation (phosphorolysis) of seryl-phosphorylated HPr (P-Ser-HPr). The two antagonistic activities of HprK/P are regulated by several intracellular metabolites, which change their concentration in response to the absence or presence of rapidly metabolisable carbon sources (glucose, fructose, etc.) in the growth medium. Therefore, by controlling the phosphorylation state of HPr, HPrK/P is a sensor enzyme that plays a major role in the regulation of carbon metabolism and sugar transport: it mediates carbon catabolite repression (CCR), and regulates PTS-catalyzed carbohydrate uptake and inducer exclusion. This chain is HPr kinase/phosphorylase, found in Streptococcus uberis (strain ATCC BAA-854 / 0140J).